The primary structure comprises 437 residues: Transcription factor AP-2-alpha (437 aa).

Lysine 10 participates in a covalent cross-link: Glycyl lysine isopeptide (Lys-Gly) (interchain with G-Cter in SUMO); alternate. Residue lysine 10 forms a Glycyl lysine isopeptide (Lys-Gly) (interchain with G-Cter in SUMO2); alternate linkage. A disordered region spans residues 14–107 (CEDRHDGASN…GQRQSQESGL (94 aa)). Residues 57–62 (YFPPPY) carry the PPxY motif motif. Low complexity-rich tracts occupy residues 65-74 (IYPQSQDPYS) and 88-101 (QPQP…GQRQ). Residues lysine 177 and lysine 184 each participate in a glycyl lysine isopeptide (Lys-Gly) (interchain with G-Cter in SUMO2) cross-link. Residue serine 239 is modified to Phosphoserine; by PKA. The H-S-H (helix-span-helix), dimerization stretch occupies residues 280-410 (RRKAANVTLL…YLTEALKAMD (131 aa)). The span at 414-427 (LSNNPNSHTDNNAK) shows a compositional bias: polar residues. Residues 414-437 (LSNNPNSHTDNNAKSSDKEEKHRK) form a disordered region. The segment covering 428–437 (SSDKEEKHRK) has biased composition (basic and acidic residues).

This sequence belongs to the AP-2 family. Binds DNA as a dimer. Can form homodimers or heterodimers with other AP-2 family members. Interacts with WWOX. Interacts with CITED4. Interacts with UBE2I. Interacts with RALBP1 in a complex also containing EPN1 and NUMB during interphase and mitosis. Interacts with KCTD1; this interaction represses transcription activation. Interacts (via C-terminus) with CITED2 (via C-terminus); the interaction stimulates TFAP2A-transcriptional activation. Interacts (via N-terminus) with EP300 (via N-terminus); the interaction requires CITED2. Interacts with KCTD15; this interaction inhibits TFAP2A transcriptional activation. Post-translationally, sumoylated on Lys-10; which inhibits transcriptional activity.

It is found in the nucleus. Its function is as follows. Sequence-specific DNA-binding protein that interacts with inducible viral and cellular enhancer elements to regulate transcription of selected genes. AP-2 factors bind to the consensus sequence 5'-GCCNNNGGC-3' and activate genes involved in a large spectrum of important biological functions including proper eye, face, body wall, limb and neural tube development. They also suppress a number of genes including MCAM/MUC18, C/EBP alpha and MYC. AP-2-alpha is the only AP-2 protein required for early morphogenesis of the lens vesicle. Together with the CITED2 coactivator, stimulates the PITX2 P1 promoter transcription activation. Associates with chromatin to the PITX2 P1 promoter region. This Bos taurus (Bovine) protein is Transcription factor AP-2-alpha (TFAP2A).